The primary structure comprises 309 residues: Isoflavone reductase homolog IRL (309 aa).

NADP(+) contacts are provided by residues 12 to 18, arginine 37, and lysine 46; that span reads GGTGYLG. Lysine 134 functions as the Proton acceptor in the catalytic mechanism. Arginine 138 is an NADP(+) binding site.

The protein belongs to the NmrA-type oxidoreductase family. Isoflavone reductase subfamily. In terms of assembly, monomer.

The protein localises to the cytoplasm. Its pathway is alkaloid biosynthesis. In terms of biological role, reductase that may be involved in a late step of alkaloid biosynthesis. The sequence is that of Isoflavone reductase homolog IRL from Zea mays (Maize).